Consider the following 426-residue polypeptide: Putative two-component response regulator ARR20 (426 aa).

Residues 40 to 155 form the Response regulatory domain; it reads SNRVLLVGAD…VIAVLWRHVY (116 aa). Asp91 is modified (4-aspartylphosphate). A disordered region spans residues 161–216; sequence KSGLDKPGESGTVESDPDEYDDLEQDNLYESNEEGSKNTCDHKEEKSPTKKPRMQW. Over residues 175-193 the composition is skewed to acidic residues; the sequence is SDPDEYDDLEQDNLYESNE. The segment covering 194–208 has biased composition (basic and acidic residues); it reads EGSKNTCDHKEEKSP. The short motif at 210 to 213 is the Nuclear localization signal element; sequence KKPR. Residues 213–268 constitute a DNA-binding region (myb-like GARP); sequence RMQWTPELHHKFEVAVEKMGSLEKAFPKTILKYMQEELNVQGLTRNNVASHLQKYR.

The protein belongs to the ARR family. Type-B subfamily. As to quaternary structure, binds the target DNA as a monomer. Post-translationally, two-component system major event consists of a His-to-Asp phosphorelay between a sensor histidine kinase (HK) and a response regulator (RR). In plants, the His-to-Asp phosphorelay involves an additional intermediate named Histidine-containing phosphotransfer protein (HPt). This multistep phosphorelay consists of a His-Asp-His-Asp sequential transfer of a phosphate group between first a His and an Asp of the HK protein, followed by the transfer to a conserved His of the HPt protein and finally the transfer to an Asp in the receiver domain of the RR protein. As to expression, predominantly expressed in mature pistil tip. Also detected in the shoot apical meristem as well as vascular tissue and hydathodes of the leaves.

It is found in the nucleus. Functionally, putative transcriptional activator that binds specifically to the DNA sequence 5'-[AG]GATT-3'. Functions as a response regulator involved in His-to-Asp phosphorelay signal transduction system. Phosphorylation of the Asp residue in the receiver domain activates the ability of the protein to promote the transcription of target genes. Could directly activate some type-A response regulators in response to cytokinins. The sequence is that of Putative two-component response regulator ARR20 (ARR20) from Arabidopsis thaliana (Mouse-ear cress).